The chain runs to 320 residues: Ribonuclease Z (320 aa).

The Zn(2+) site is built by H63, H65, D67, H68, H141, D212, and H270. Catalysis depends on D67, which acts as the Proton acceptor.

This sequence belongs to the RNase Z family. Homodimer. Zn(2+) is required as a cofactor.

The catalysed reaction is Endonucleolytic cleavage of RNA, removing extra 3' nucleotides from tRNA precursor, generating 3' termini of tRNAs. A 3'-hydroxy group is left at the tRNA terminus and a 5'-phosphoryl group is left at the trailer molecule.. In terms of biological role, zinc phosphodiesterase, which displays some tRNA 3'-processing endonuclease activity. Probably involved in tRNA maturation, by removing a 3'-trailer from precursor tRNA. This Lacticaseibacillus casei (strain BL23) (Lactobacillus casei) protein is Ribonuclease Z.